The sequence spans 265 residues: Zinc transporter ZupT (265 aa).

A run of 8 helical transmembrane segments spans residues 6-26, 37-57, 77-97, 122-142, 150-170, 184-204, 208-228, and 245-265; these read IAFAFSLVLLSGLSTSIGGAL, FMAAALGLSAGVMLYVSFMEI, WTMMGAFFAGIAIITIIDRLV, GMFTAFALAIHNFPEGFATFL, IAIPVAVAIAIHNIPEGIAVA, FWWATLSGLAEPLGALIGFAL, FIGPMTFGISFAVIAGIMVFI, and CAIYGLIAGMAVMAVSLALFI. Positions 133 and 136 each coordinate Fe(2+). Zn(2+) is bound by residues Glu-136 and His-161. 3 residues coordinate Fe(2+): Asn-162, Glu-165, and Glu-194. Position 165 (Glu-165) interacts with Zn(2+).

Belongs to the ZIP transporter (TC 2.A.5) family. ZupT subfamily.

It is found in the cell membrane. It catalyses the reaction Zn(2+)(in) = Zn(2+)(out). Functionally, mediates zinc uptake. May also transport other divalent cations. The polypeptide is Zinc transporter ZupT (Corynebacterium aurimucosum (strain ATCC 700975 / DSM 44827 / CIP 107346 / CN-1) (Corynebacterium nigricans)).